Here is a 449-residue protein sequence, read N- to C-terminus: UDP-N-acetylmuramoylalanine--D-glutamate ligase (449 aa).

118–124 contributes to the ATP binding site; sequence GSNGKTT.

This sequence belongs to the MurCDEF family.

The protein localises to the cytoplasm. It carries out the reaction UDP-N-acetyl-alpha-D-muramoyl-L-alanine + D-glutamate + ATP = UDP-N-acetyl-alpha-D-muramoyl-L-alanyl-D-glutamate + ADP + phosphate + H(+). It functions in the pathway cell wall biogenesis; peptidoglycan biosynthesis. Functionally, cell wall formation. Catalyzes the addition of glutamate to the nucleotide precursor UDP-N-acetylmuramoyl-L-alanine (UMA). This chain is UDP-N-acetylmuramoylalanine--D-glutamate ligase, found in Leuconostoc mesenteroides subsp. mesenteroides (strain ATCC 8293 / DSM 20343 / BCRC 11652 / CCM 1803 / JCM 6124 / NCDO 523 / NBRC 100496 / NCIMB 8023 / NCTC 12954 / NRRL B-1118 / 37Y).